Reading from the N-terminus, the 393-residue chain is Rhizopuspepsin (393 aa).

The first 21 residues, 1 to 21 (MKFTLISSCIAIAALAVAVDA), serve as a signal peptide directing secretion. Residues 22–68 (APGEKKISIPLAKNPNYKPSAKNAIQKAIAKYNKHKINTSTGGIVPD) constitute a propeptide, activation peptide. In terms of domain architecture, Peptidase A1 spans 85–389 (YYGQVTIGTP…NQGVPEVQIA (305 aa)). Residue aspartate 103 is part of the active site. Cysteine 116 and cysteine 119 are oxidised to a cystine. Residue aspartate 286 is part of the active site. Cysteine 320 and cysteine 353 are disulfide-bonded.

It belongs to the peptidase A1 family.

The catalysed reaction is Hydrolysis of proteins with broad specificity similar to that of pepsin A, preferring hydrophobic residues at P1 and P1'. Clots milk and activates trypsinogen. Does not cleave 4-Gln-|-His-5, but does cleave 10-His-|-Leu-11 and 12-Val-|-Glu-13 in B chain of insulin.. The polypeptide is Rhizopuspepsin (Rhizopus chinensis (Bread mold)).